Consider the following 230-residue polypeptide: Flagellar L-ring protein (230 aa).

An N-terminal signal peptide occupies residues Met-1 to Gly-22. A lipid anchor (N-palmitoyl cysteine) is attached at Cys-23. The S-diacylglycerol cysteine moiety is linked to residue Cys-23.

Belongs to the FlgH family. As to quaternary structure, the basal body constitutes a major portion of the flagellar organelle and consists of four rings (L,P,S, and M) mounted on a central rod.

It is found in the cell outer membrane. The protein localises to the bacterial flagellum basal body. In terms of biological role, assembles around the rod to form the L-ring and probably protects the motor/basal body from shearing forces during rotation. The chain is Flagellar L-ring protein from Stenotrophomonas maltophilia (strain K279a).